The primary structure comprises 234 residues: Proteasome subunit alpha type-2 (234 aa).

Belongs to the peptidase T1A family. The 26S proteasome consists of a 20S proteasome core and two 19S regulatory subunits. The 20S proteasome core is composed of 28 subunits that are arranged in four stacked rings, resulting in a barrel-shaped structure. The two end rings are each formed by seven alpha subunits, and the two central rings are each formed by seven beta subunits. The catalytic chamber with the active sites is on the inside of the barrel. Interacts with Rpn6.

It localises to the cytoplasm. The protein resides in the nucleus. Functionally, the proteasome is a multicatalytic proteinase complex which is characterized by its ability to cleave peptides with Arg, Phe, Tyr, Leu, and Glu adjacent to the leaving group at neutral or slightly basic pH. The proteasome has an ATP-dependent proteolytic activity. This chain is Proteasome subunit alpha type-2 (Prosalpha2), found in Drosophila melanogaster (Fruit fly).